Consider the following 387-residue polypeptide: Succinate--CoA ligase [ADP-forming] subunit beta (387 aa).

Residues 9–245 (KDLLESYGLK…KSQENAKELK (237 aa)) form the ATP-grasp domain. Residues Lys-46, 53 to 55 (GRG), Glu-100, Tyr-103, and Glu-108 contribute to the ATP site. Asn-200 and Asp-214 together coordinate Mg(2+). Residues Asn-265 and 322 to 324 (GIV) contribute to the substrate site.

The protein belongs to the succinate/malate CoA ligase beta subunit family. In terms of assembly, heterotetramer of two alpha and two beta subunits. Mg(2+) serves as cofactor.

It carries out the reaction succinate + ATP + CoA = succinyl-CoA + ADP + phosphate. The enzyme catalyses GTP + succinate + CoA = succinyl-CoA + GDP + phosphate. Its pathway is carbohydrate metabolism; tricarboxylic acid cycle; succinate from succinyl-CoA (ligase route): step 1/1. Functionally, succinyl-CoA synthetase functions in the citric acid cycle (TCA), coupling the hydrolysis of succinyl-CoA to the synthesis of either ATP or GTP and thus represents the only step of substrate-level phosphorylation in the TCA. The beta subunit provides nucleotide specificity of the enzyme and binds the substrate succinate, while the binding sites for coenzyme A and phosphate are found in the alpha subunit. This chain is Succinate--CoA ligase [ADP-forming] subunit beta, found in Francisella tularensis subsp. tularensis (strain WY96-3418).